The following is a 160-amino-acid chain: SsrA-binding protein (160 aa).

Positions lysine 138–glutamine 148 are enriched in basic and acidic residues. Residues lysine 138 to arginine 160 are disordered.

This sequence belongs to the SmpB family.

The protein localises to the cytoplasm. In terms of biological role, required for rescue of stalled ribosomes mediated by trans-translation. Binds to transfer-messenger RNA (tmRNA), required for stable association of tmRNA with ribosomes. tmRNA and SmpB together mimic tRNA shape, replacing the anticodon stem-loop with SmpB. tmRNA is encoded by the ssrA gene; the 2 termini fold to resemble tRNA(Ala) and it encodes a 'tag peptide', a short internal open reading frame. During trans-translation Ala-aminoacylated tmRNA acts like a tRNA, entering the A-site of stalled ribosomes, displacing the stalled mRNA. The ribosome then switches to translate the ORF on the tmRNA; the nascent peptide is terminated with the 'tag peptide' encoded by the tmRNA and targeted for degradation. The ribosome is freed to recommence translation, which seems to be the essential function of trans-translation. In Serratia proteamaculans (strain 568), this protein is SsrA-binding protein.